We begin with the raw amino-acid sequence, 3146 residues long: MEPPNNANTGQLGPTLPNGTVDLPTDLSREITRHFGLEQDEIEEILPCTPFQRDVIECASDDKRRAVGHVVYEIPEDVDTERLAAAWKATVRYTPALRTCIFTSETGNAFQVVLRDYFIFARMYCPSAHLKSAIVKDEATAAVAGPRCNRYVLTGEPNSKRRVLVWTFSHSFVDSAFQGRILQQVLAAYKDGHGRVFSLQPTTDLTESENGDHLSTPASERTVVIERATQFWQEKLHGLDASVFPHLPSHKRVPAIDARADHYLPCPPFIQHEWSSTTVCRTALAILLARYTHSSEALFGVVTEQSHEEHPLLLDGPTSTVVPFRVLCALNQSVSKVMEAITTYDHDMRQFAHAGLCNISRIGDDASAACGFQTVLMVTDSRTAGDDEIHQVLEESEKFIPCTDRALLLSCQMTDEGVLLVARYDQSILEPLQMARFLRQLGFLINKLQSTDGSPCVGQLDVLAPEDRTEIEGWNSEPLQTQDCLIHSEVVRNAGDTPNKPAVCAWDGEWTYSELNNVSSRLASYISSLDLGQQLIVPIYLEKSKWVMAAILAVLKAGHAFTLIDPNDPPARTAQIIKQASASIALTSALHQSKMQAVVGRCITVDDDLVQTLTTFEGSQVASAAKPGDLAYVIFTSGSTGDPKGIMIEHRAFYSSVVKFGKALGIRSSTRALQFATHGFGAFLLEVLTTLIHGGCICVPSDHDRMHNIPGFIRQNQINWMMATPSYMTTMKPEDVPGLETLVLVGEQMSSSINDVWLSELQLLDGYGQSESSSICFVGKIDDSSRDPNNLGWAIGAHSWIINPDNPDQLVPIGAIGELLIESPGIARGYLFSQSTETPFLERAPAWYASKQPPYGVKFYRTGDLARYAPDGTVICLGRMDSQVKIRGQRVELDAIENLLRRQFPSDVTVVAEAVKRSDLPSSVVITGFLISSEYVVGAPSTEDTYILDQVVTQEINAKMRQILPAHSIPSFYICMKSLPRTATGKVDRRKLRSIGSSLLALQAQSTAPRSSQAPDASAGVTKLEEVWMDIFNLTPNSHNIGGNFFALGGDSITAIKMVNMARAAGIQLKVSDIFQNPTLASLQAAIGGSSMTVTSIPALALDGPVEQSYSQGRLWFLDQLEIGANWYTIPYAVRLRGPLDVDALNRALLALEKRHETLRTTFEDQDGVGVQIIHETLLDQLRIINADHADYVQLLKQEQTAPFNLASESGWRVSLIRLDDDDNILSIVMHHIISDGWSIDVLRRELGQLYAAALHGADLFGSALSPLPIQYRDFSVWQKQDAQVAEHERQLQYWQKQLADCSPAKLPTDFHRPALLSGKATTVPVTITSELYYRLQEFCSTFNTTSFVVLLATFRAAHYRLTGVDDAVIGTPIANRNRHELENLIGFFVNTQCMRITINEDEDTFESLVRQVRSTTTAAFEHEDVPFERVVSAMLPGSRDLSQNPLAQLVFAIHSHKDLGKFELEALESEPLQNEVYTRFDAEFHFFQAPDGLTGYINFATELFKVETIQNVVSVFLQILRHGLEHPQTLISVVPLTDGLAELRSMGLLEIKKVEYPRDSSVVDVFRTQVASYPDTLAVVDSSSRLTYAELDHQSDLLATWLRQQNLPTEALVVVLAPRSCETIITFLGILKANLAYLPLDIRSPITRMRDVLSTLPGRTIALLCSDEVAPDFQLPSIELVRIADALEEAAGMTSLNGHEHVPVPSPSPTSLAYVLYTSGSTGRPKGVMIEHRAIVRLARSDIIPDYRPACGDTMAHMFNTAFDGATYEIYTMLLNGGTLVCVDYMDTLSPKSLEAVFKKEQVNATIMAPALLKLYLADARDALKGLDVLISGGDRFDPQDAVDAQSLVRGSCYNGYGPTENGVFSTVYKVDKNDPFVNGVPLGRAVNNSGAYVVDRNQQLVGPGIIGELVVTGDGLARGYTERAFDQNRFTQLKVEGQSVRGYRTGDRVRYRVGEGLIEFFGRMDFQFKIRSNRIEAGEVEAAILSHPAVRNAAVILRVEEKLEPEIVGFVVAEHDDTAEQEEAGDQVEGWQAFFESTTYTELDTVSSSEIGKDFKGWTSMYDGNEIDKAEMQEWLDDTIHTLTDGQALGHVLEIGTGSGMVLFNLGSGLQSFVGLEPSKSAAAFVNNAIKSTPALAGKAQVFVGTATDTNKLDDLHPDLVIFNSVLQYFPTRDYLERVVDALVHLRSAKRIFFGDVRSYATNRHFLAARAIYTLGNHTTKDEVRKKMAEMEEREEEFLVEPAFFTTLVNRLPDVRHVEIIPKNMQATNELSAYRYAAVVHLRGSDELTRPVHPIKMDDWVDFQASHMHKDALREYLRLAENTKTVAISNIPYGKTIFERQVVESLDETSEDAPHASLDGAAWISAVRSDAKARSSLSVPDLVLLAKETGFRVEVSAARQWSQSGALDAVFHRYPAEPGVRTLFQFPTDNDVRMSAPLTNQPLQRLQKRRVAVQVREWLQDRIPSYMIPSHIVALDQMPLNTSGKVDRKELSRQAKAIKKVQKSAPPTAPAFPLSEVEVMLCEELTKTFEMDVNITDDFFQLGGHSLLATRLVARISHRLGARLTVKDVFDYPVFSELADIIRQQLASKNTLLPTASAGGGGQDKKESAGVAPTTDMEAMLCEEFANILGMDVGITDNFFDLGGHSLMATRLAARIGHRLNTTISVKDIFSHPVIFQLSAKLEVSQLESSSGGTDIKMPDYTAFQLIPAADAEKFMQDHIYPQINFSQDMVQDVYLATHLQQCFLRDVFGRPKPLVPFYVEFPPDSNPHTLATACTSLVDKYDIFRTIFVEAEGNLYQVVLKHLNLDIDVVETDANVHKTSSDLVDAIAKEPVRLGQPMIQVKVLKQTSSVRVLLWLSHALYDGLSWEHIVRDLHILSKERSLPPATQFSRYMQYVDHTRGPGCDFWRDVLQNAPITNLSDAGSGGRPTKAGDPRVWHAGKVISGPSQAIRSSITQATVFNAACAIVLSKETGTDNVVFGRIVSGRQGLPVRWQNIIGPCTNAVPVRAVVDAHGNHQQMLRDLQEQYLLSLPYETIGFDEIKRSCTDWPDSARNYGCCVTYQNFEYHPESEVDQQRVEMGILAKKAELIKEEPLYNVAIAGEVEPDGVHLQVTVVVDSQLFSQEGATHLMEQVCNTFQALNASL.

Residues 1–12 show a composition bias toward polar residues; that stretch reads MEPPNNANTGQL. Residues 1–23 form a disordered region; it reads MEPPNNANTGQLGPTLPNGTVDL. Residues 69–454 are condensation 1; it reads HVVYEIPEDV…INKLQSTDGS (386 aa). The interval 495 to 887 is adenylation 1; the sequence is GDTPNKPAVC…GRMDSQVKIR (393 aa). The Carrier 1 domain occupies 1015–1091; the sequence is PDASAGVTKL…SLQAAIGGSS (77 aa). Residue Ser1052 is modified to O-(pantetheine 4'-phosphoryl)serine. The segment at 1109–1538 is condensation 2; that stretch reads SYSQGRLWFL…QTLISVVPLT (430 aa). Residues 1567–1973 are adenylation 2; sequence FRTQVASYPD…GRMDFQFKIR (407 aa). Residues 2041–2181 are S-adenosyl-L-methionine-dependent N-methyltransferase (MT); that stretch reads TYTELDTVSS…FPTRDYLERV (141 aa). Carrier domains follow at residues 2514 to 2588 and 2614 to 2688; these read FPLS…RQQL and APTT…EVSQ. 2 positions are modified to O-(pantetheine 4'-phosphoryl)serine: Ser2548 and Ser2648. The segment at 2734–3138 is condensation 3; that stretch reads QDVYLATHLQ…THLMEQVCNT (405 aa).

The protein belongs to the NRP synthetase family.

It carries out the reaction 4 (R)-2-hydroxy-3-methylbutanoate + 4 L-leucine + 4 S-adenosyl-L-methionine + 8 ATP = bassianolide + 8 AMP + 4 S-adenosyl-L-homocysteine + 8 diphosphate + 8 H(+). In terms of biological role, bassianolide nonribosomal synthetase that mediates the biosynthesis of bassianolide (BSL), a non-ribosomal cyclodepsipeptide that shows insecticidal and cancer cell antiproliferative activity. BSLS first catalyzes the iterative synthesis of an enzyme-bound dipeptidol monomer intermediate from D-2-hydroxyisovalerate and L-leucine before performing the condensation and cyclization of 4 dipeptidol monomers to yield the cyclic tetrameric ester bassianolide. The N-methyltransferase MT domain is responsible for the methylation of the leucine residues of bassianolide. BSLS is flexible with both the amino acid and hydroxyl acid precursors, and produces bassianolide as the major product (containing N-methyl-L-Leu), together with small amounts of beauvericin and its analogs beauvericins A-C (containing N-methyl-L-Phe). In Beauveria bassiana (White muscardine disease fungus), this protein is Bassianolide nonribosomal cyclodepsipeptide synthetase.